The chain runs to 881 residues: Low-affinity phosphate transporter PHO90 (881 aa).

An SPX domain is found at 1–288; that stretch reads MRFSHFLKYN…HLNTRTELIE (288 aa). 12 consecutive transmembrane segments (helical) span residues 417–437, 456–476, 493–513, 514–534, 539–559, 581–601, 663–683, 691–711, 718–738, 758–778, 805–825, and 854–874; these read IYFI…NDAA, AIPL…FKVL, ILAA…TLGE, VLAQ…FAGC, VLLM…NVAA, AQAL…SSPI, FTVK…LWCV, FGSS…TGLL, AFPW…KAVS, GVFA…TFVS, ILVF…SSGF, and ASIL…ASVV.

The protein belongs to the CitM (TC 2.A.11) transporter family.

Its subcellular location is the membrane. Low-affinity phosphate transporter involved in the control of cellular phosphate levels. The protein is Low-affinity phosphate transporter PHO90 (PHO90) of Saccharomyces cerevisiae (strain ATCC 204508 / S288c) (Baker's yeast).